A 338-amino-acid chain; its full sequence is Ketol-acid reductoisomerase (NADP(+)) (338 aa).

The 181-residue stretch at 1–181 (MKVYYDKDAD…GGTRGGVIET (181 aa)) folds into the KARI N-terminal Rossmann domain. NADP(+) contacts are provided by residues 24 to 27 (YGSQ), R47, and S52. The active site involves H107. G133 contributes to the NADP(+) binding site. One can recognise a KARI C-terminal knotted domain in the interval 182 to 327 (TFKEETETDL…AKLRDMMPWI (146 aa)). 4 residues coordinate Mg(2+): D190, E194, E226, and E230. Residue S251 coordinates substrate.

It belongs to the ketol-acid reductoisomerase family. Mg(2+) serves as cofactor.

It catalyses the reaction (2R)-2,3-dihydroxy-3-methylbutanoate + NADP(+) = (2S)-2-acetolactate + NADPH + H(+). The enzyme catalyses (2R,3R)-2,3-dihydroxy-3-methylpentanoate + NADP(+) = (S)-2-ethyl-2-hydroxy-3-oxobutanoate + NADPH + H(+). It participates in amino-acid biosynthesis; L-isoleucine biosynthesis; L-isoleucine from 2-oxobutanoate: step 2/4. It functions in the pathway amino-acid biosynthesis; L-valine biosynthesis; L-valine from pyruvate: step 2/4. Involved in the biosynthesis of branched-chain amino acids (BCAA). Catalyzes an alkyl-migration followed by a ketol-acid reduction of (S)-2-acetolactate (S2AL) to yield (R)-2,3-dihydroxy-isovalerate. In the isomerase reaction, S2AL is rearranged via a Mg-dependent methyl migration to produce 3-hydroxy-3-methyl-2-ketobutyrate (HMKB). In the reductase reaction, this 2-ketoacid undergoes a metal-dependent reduction by NADPH to yield (R)-2,3-dihydroxy-isovalerate. This chain is Ketol-acid reductoisomerase (NADP(+)), found in Nitrosomonas europaea (strain ATCC 19718 / CIP 103999 / KCTC 2705 / NBRC 14298).